The chain runs to 457 residues: Chromosomal replication initiator protein DnaA (457 aa).

Residues 1-90 (MDTNNNIEKE…HSVDVRIEVA (90 aa)) form a domain I, interacts with DnaA modulators region. Residues 91–112 (PKIQINAQSNINYKAIKTSVKD) form a domain II region. Residues 113-323 (SYTFENFVVG…GAIIKISVNA (211 aa)) form a domain III, AAA+ region region. G153, G155, K156, and T157 together coordinate ATP. Residues 324-457 (NLMNASIDLN…DKKTAFNSSE (134 aa)) form a domain IV, binds dsDNA region.

Belongs to the DnaA family. In terms of assembly, oligomerizes as a right-handed, spiral filament on DNA at oriC. Interacts via domain I with HobA. In a crystal with domains I and II of DnaA HobA forms tetramers with DnaA fragments bound at the dimer interface of the tetramer.

Its subcellular location is the cytoplasm. The protein localises to the cell inner membrane. In terms of biological role, plays an essential role in the initiation and regulation of chromosomal replication. ATP-DnaA binds to the origin of replication (oriC) to initiate formation of the DNA replication initiation complex once per cell cycle. Binds the DnaA box (a 9 base pair repeat at the origin) and separates the double-stranded (ds)DNA. Forms a right-handed helical filament on oriC DNA; dsDNA binds to the exterior of the filament while single-stranded (ss)DNA is stabiized in the filament's interior. The ATP-DnaA-oriC complex binds and stabilizes one strand of the AT-rich DNA unwinding element (DUE), permitting loading of DNA polymerase. After initiation quickly degrades to an ADP-DnaA complex that is not apt for DNA replication. Binds acidic phospholipids. The DnaA box is 5'-TTATC[CA]A[CA]A-3' in this bacterium cycle. Multiple discrete DnaA-oriC complexes can be seen as DnaA levels increase. Binding of DnaA to oriC is increased by HobA; some chi-type structures can be seen by electron microscopy. Strand separation requires the DnaA boxes and adjacent DnaA-trio motifs but works equally well with ADP or ATP. The chain is Chromosomal replication initiator protein DnaA from Helicobacter pylori (strain ATCC 700392 / 26695) (Campylobacter pylori).